Here is a 134-residue protein sequence, read N- to C-terminus: Viral interleukin-8 homolog (134 aa).

Residues Met1–Gly22 form the signal peptide.

It belongs to the intercrine alpha (chemokine CxC) family. In terms of assembly, homodimer.

The protein localises to the secreted. Functionally, plays a role in the early phase of cytolytic infections presumably by recruiting host B or T-lymphocytes. This chain is Viral interleukin-8 homolog (MDV078), found in Gallus gallus (Chicken).